We begin with the raw amino-acid sequence, 351 residues long: Dihydroorotate dehydrogenase (quinone) (351 aa).

Residues 67 to 71 (AGFDK) and T91 each bind FMN. K71 provides a ligand contact to substrate. 116-120 (NAMGF) serves as a coordination point for substrate. FMN-binding residues include N145 and N178. Residue N178 coordinates substrate. S181 (nucleophile) is an active-site residue. Residue N183 coordinates substrate. Residues K214 and T242 each contribute to the FMN site. Residue 243-244 (NT) participates in substrate binding. Residues G262, G291, and 312 to 313 (YS) each bind FMN.

This sequence belongs to the dihydroorotate dehydrogenase family. Type 2 subfamily. As to quaternary structure, monomer. It depends on FMN as a cofactor.

It is found in the cell membrane. It catalyses the reaction (S)-dihydroorotate + a quinone = orotate + a quinol. It functions in the pathway pyrimidine metabolism; UMP biosynthesis via de novo pathway; orotate from (S)-dihydroorotate (quinone route): step 1/1. Its function is as follows. Catalyzes the conversion of dihydroorotate to orotate with quinone as electron acceptor. In Helicobacter pylori (strain P12), this protein is Dihydroorotate dehydrogenase (quinone).